The sequence spans 301 residues: Homoserine O-acetyltransferase (301 aa).

C142 acts as the Acyl-thioester intermediate in catalysis. Residues K163 and S192 each coordinate substrate. The active-site Proton acceptor is the H235. Residue E237 is part of the active site. R249 contributes to the substrate binding site.

This sequence belongs to the MetA family.

It localises to the cytoplasm. It catalyses the reaction L-homoserine + acetyl-CoA = O-acetyl-L-homoserine + CoA. It functions in the pathway amino-acid biosynthesis; L-methionine biosynthesis via de novo pathway; O-acetyl-L-homoserine from L-homoserine: step 1/1. In terms of biological role, transfers an acetyl group from acetyl-CoA to L-homoserine, forming acetyl-L-homoserine. This Bacillus cereus (strain ATCC 14579 / DSM 31 / CCUG 7414 / JCM 2152 / NBRC 15305 / NCIMB 9373 / NCTC 2599 / NRRL B-3711) protein is Homoserine O-acetyltransferase.